Here is a 163-residue protein sequence, read N- to C-terminus: Protein-export protein SecB (163 aa).

This sequence belongs to the SecB family. In terms of assembly, homotetramer, a dimer of dimers. One homotetramer interacts with 1 SecA dimer.

The protein localises to the cytoplasm. Functionally, one of the proteins required for the normal export of preproteins out of the cell cytoplasm. It is a molecular chaperone that binds to a subset of precursor proteins, maintaining them in a translocation-competent state. It also specifically binds to its receptor SecA. This Burkholderia cenocepacia (strain ATCC BAA-245 / DSM 16553 / LMG 16656 / NCTC 13227 / J2315 / CF5610) (Burkholderia cepacia (strain J2315)) protein is Protein-export protein SecB.